The chain runs to 247 residues: Uracil-DNA glycosylase (247 aa).

The active-site Proton acceptor is the D83.

It belongs to the uracil-DNA glycosylase (UDG) superfamily. UNG family.

It is found in the cytoplasm. It catalyses the reaction Hydrolyzes single-stranded DNA or mismatched double-stranded DNA and polynucleotides, releasing free uracil.. Functionally, excises uracil residues from the DNA which can arise as a result of misincorporation of dUMP residues by DNA polymerase or due to deamination of cytosine. The chain is Uracil-DNA glycosylase from Deinococcus radiodurans (strain ATCC 13939 / DSM 20539 / JCM 16871 / CCUG 27074 / LMG 4051 / NBRC 15346 / NCIMB 9279 / VKM B-1422 / R1).